The chain runs to 52 residues: Unknown protein from spot 415 of 2D-PAGE of etiolated coleoptile (52 aa).

This Zea mays (Maize) protein is Unknown protein from spot 415 of 2D-PAGE of etiolated coleoptile.